The sequence spans 413 residues: 1-deoxy-D-xylulose 5-phosphate reductoisomerase (413 aa).

6 residues coordinate NADPH: threonine 21, glycine 22, serine 23, isoleucine 24, glycine 47, and asparagine 127. Lysine 128 serves as a coordination point for 1-deoxy-D-xylulose 5-phosphate. Glutamate 129 lines the NADPH pocket. Aspartate 151 is a binding site for Mn(2+). Residues serine 152, glutamate 153, serine 177, and histidine 200 each coordinate 1-deoxy-D-xylulose 5-phosphate. Position 153 (glutamate 153) interacts with Mn(2+). Glycine 206 is a binding site for NADPH. Serine 213, asparagine 218, lysine 219, and glutamate 222 together coordinate 1-deoxy-D-xylulose 5-phosphate. Glutamate 222 contacts Mn(2+).

Belongs to the DXR family. Mg(2+) serves as cofactor. It depends on Mn(2+) as a cofactor.

It catalyses the reaction 2-C-methyl-D-erythritol 4-phosphate + NADP(+) = 1-deoxy-D-xylulose 5-phosphate + NADPH + H(+). It participates in isoprenoid biosynthesis; isopentenyl diphosphate biosynthesis via DXP pathway; isopentenyl diphosphate from 1-deoxy-D-xylulose 5-phosphate: step 1/6. Functionally, catalyzes the NADPH-dependent rearrangement and reduction of 1-deoxy-D-xylulose-5-phosphate (DXP) to 2-C-methyl-D-erythritol 4-phosphate (MEP). The chain is 1-deoxy-D-xylulose 5-phosphate reductoisomerase from Mycobacterium bovis (strain ATCC BAA-935 / AF2122/97).